The sequence spans 475 residues: ATP synthase subunit beta, chloroplastic (475 aa).

Position 156–163 (156–163 (GGAGVGKT)) interacts with ATP.

This sequence belongs to the ATPase alpha/beta chains family. As to quaternary structure, F-type ATPases have 2 components, CF(1) - the catalytic core - and CF(0) - the membrane proton channel. CF(1) has five subunits: alpha(3), beta(3), gamma(1), delta(1), epsilon(1). CF(0) has four main subunits: a(1), b(1), b'(1) and c(9-12).

It localises to the plastid. It is found in the chloroplast thylakoid membrane. The enzyme catalyses ATP + H2O + 4 H(+)(in) = ADP + phosphate + 5 H(+)(out). In terms of biological role, produces ATP from ADP in the presence of a proton gradient across the membrane. The catalytic sites are hosted primarily by the beta subunits. The chain is ATP synthase subunit beta, chloroplastic from Phaeodactylum tricornutum (strain CCAP 1055/1).